Reading from the N-terminus, the 132-residue chain is Pro-MCH 2 (132 aa).

The signal sequence occupies residues 1–24; that stretch reads MRDSVLSVIFALALFLECYTPSMA. Cys-120 and Cys-129 are joined by a disulfide.

This sequence belongs to the melanin-concentrating hormone family. Pituitary gland. Produced in neurons of lateral basal hypothalamus which project both to the brain and to the neural lobe of the pituitary gland from where MCH is released.

Plays a role in skin pigmentation by antagonizing the action of melanotropin alpha. Induces melanin concentration within the melanophores. May participate in the control of the hypothalamo-pituitary adrenal gland axis by inhibiting the release of ACTH. The polypeptide is Pro-MCH 2 (mch2) (Oncorhynchus keta (Chum salmon)).